We begin with the raw amino-acid sequence, 456 residues long: Chromosomal replication initiator protein DnaA (456 aa).

The interval 1–85 is domain I, interacts with DnaA modulators; it reads MDADLNKLWE…EIKFIIESDL (85 aa). Residues 85 to 117 are domain II; the sequence is LNNEDELNNSDNSDKNRDKNSRRNIVVNDEMSS. A domain III, AAA+ region region spans residues 118-334; sequence TLNPKYTFNS…GALIRIIAYS (217 aa). Gly-162, Gly-164, Lys-165, and Thr-166 together coordinate ATP. Residues 335–456 are domain IV, binds dsDNA; it reads SLTNREVTVD…SDITKKVSQN (122 aa).

Belongs to the DnaA family. In terms of assembly, oligomerizes as a right-handed, spiral filament on DNA at oriC.

It is found in the cytoplasm. In terms of biological role, plays an essential role in the initiation and regulation of chromosomal replication. ATP-DnaA binds to the origin of replication (oriC) to initiate formation of the DNA replication initiation complex once per cell cycle. Binds the DnaA box (a 9 base pair repeat at the origin) and separates the double-stranded (ds)DNA. Forms a right-handed helical filament on oriC DNA; dsDNA binds to the exterior of the filament while single-stranded (ss)DNA is stabiized in the filament's interior. The ATP-DnaA-oriC complex binds and stabilizes one strand of the AT-rich DNA unwinding element (DUE), permitting loading of DNA polymerase. After initiation quickly degrades to an ADP-DnaA complex that is not apt for DNA replication. Binds acidic phospholipids. In Clostridium botulinum (strain Eklund 17B / Type B), this protein is Chromosomal replication initiator protein DnaA.